A 260-amino-acid polypeptide reads, in one-letter code: UPF0246 protein Mmwyl1_3597 (260 aa).

The protein belongs to the UPF0246 family.

This chain is UPF0246 protein Mmwyl1_3597, found in Marinomonas sp. (strain MWYL1).